The chain runs to 325 residues: Elongation factor P--(R)-beta-lysine ligase (325 aa).

Residue 76–78 coordinates substrate; that stretch reads SPE. ATP-binding positions include 100-102 and Asn-109; that span reads RNE. Tyr-118 is a binding site for substrate. 244-245 is an ATP binding site; sequence EL. Glu-251 is a binding site for substrate. An ATP-binding site is contributed by Gly-300.

Belongs to the class-II aminoacyl-tRNA synthetase family. EpmA subfamily. In terms of assembly, homodimer.

It carries out the reaction D-beta-lysine + L-lysyl-[protein] + ATP = N(6)-((3R)-3,6-diaminohexanoyl)-L-lysyl-[protein] + AMP + diphosphate + H(+). Functionally, with EpmB is involved in the beta-lysylation step of the post-translational modification of translation elongation factor P (EF-P). Catalyzes the ATP-dependent activation of (R)-beta-lysine produced by EpmB, forming a lysyl-adenylate, from which the beta-lysyl moiety is then transferred to the epsilon-amino group of a conserved specific lysine residue in EF-P. This is Elongation factor P--(R)-beta-lysine ligase from Hamiltonella defensa subsp. Acyrthosiphon pisum (strain 5AT).